A 151-amino-acid chain; its full sequence is High mobility group B protein 14 (151 aa).

2 disordered regions span residues 1-62 and 132-151; these read MTKR…QTKM and TKRM…DYSE. Low complexity predominate over residues 7–20; it reads KSGPLSPSCSGGSS. Residues 35–56 are compositionally biased toward basic residues; sequence RSTRLRLQPLRKPKTSPKKKPV. The HMG box DNA-binding region spans 63–132; sequence PKKPATAFFF…EFHRAMTEYT (70 aa). A compositionally biased stretch (basic and acidic residues) spans 132–142; it reads TKRMESGAHDE. Serine 150 carries the post-translational modification Phosphoserine.

It belongs to the HMGB family.

The protein localises to the nucleus. This is High mobility group B protein 14 (HMGB14) from Arabidopsis thaliana (Mouse-ear cress).